The following is a 188-amino-acid chain: Elongation factor P (188 aa).

Belongs to the elongation factor P family.

Its subcellular location is the cytoplasm. It participates in protein biosynthesis; polypeptide chain elongation. Functionally, involved in peptide bond synthesis. Stimulates efficient translation and peptide-bond synthesis on native or reconstituted 70S ribosomes in vitro. Probably functions indirectly by altering the affinity of the ribosome for aminoacyl-tRNA, thus increasing their reactivity as acceptors for peptidyl transferase. The polypeptide is Elongation factor P (efp) (Rickettsia prowazekii (strain Madrid E)).